A 277-amino-acid polypeptide reads, in one-letter code: Energy-coupling factor transporter ATP-binding protein EcfA1 (277 aa).

Positions I4 to K238 constitute an ABC transporter domain. G38–S45 lines the ATP pocket.

This sequence belongs to the ABC transporter superfamily. Energy-coupling factor EcfA family. In terms of assembly, forms a stable energy-coupling factor (ECF) transporter complex composed of 2 membrane-embedded substrate-binding proteins (S component), 2 ATP-binding proteins (A component) and 2 transmembrane proteins (T component).

Its subcellular location is the cell membrane. In terms of biological role, ATP-binding (A) component of a common energy-coupling factor (ECF) ABC-transporter complex. Unlike classic ABC transporters this ECF transporter provides the energy necessary to transport a number of different substrates. The sequence is that of Energy-coupling factor transporter ATP-binding protein EcfA1 from Oenococcus oeni (strain ATCC BAA-331 / PSU-1).